A 342-amino-acid chain; its full sequence is Nicotinate-nucleotide--dimethylbenzimidazole phosphoribosyltransferase (342 aa).

Catalysis depends on Glu311, which acts as the Proton acceptor.

This sequence belongs to the CobT family.

The catalysed reaction is 5,6-dimethylbenzimidazole + nicotinate beta-D-ribonucleotide = alpha-ribazole 5'-phosphate + nicotinate + H(+). It participates in nucleoside biosynthesis; alpha-ribazole biosynthesis; alpha-ribazole from 5,6-dimethylbenzimidazole: step 1/2. Functionally, catalyzes the synthesis of alpha-ribazole-5'-phosphate from nicotinate mononucleotide (NAMN) and 5,6-dimethylbenzimidazole (DMB). This Shewanella piezotolerans (strain WP3 / JCM 13877) protein is Nicotinate-nucleotide--dimethylbenzimidazole phosphoribosyltransferase.